The chain runs to 375 residues: All-trans-retinol dehydrogenase [NAD(+)] ADH1B (375 aa).

Ser-2 bears the N-acetylserine mark. At Ser-23 the chain carries Phosphoserine. Tyr-35 carries the phosphotyrosine modification. Residues Cys-47, His-68, Cys-98, Cys-101, Cys-104, Cys-112, and Cys-175 each coordinate Zn(2+). NAD(+) is bound by residues 200-205 (GLGGVG), Asp-224, Lys-229, 293-295 (VGV), and Arg-370.

This sequence belongs to the zinc-containing alcohol dehydrogenase family. As to quaternary structure, dimer of identical or non-identical chains of three types; alpha, beta and gamma. The cofactor is Zn(2+).

The protein localises to the cytoplasm. It carries out the reaction all-trans-retinol + NAD(+) = all-trans-retinal + NADH + H(+). The catalysed reaction is all-trans-4-hydroxyretinol + NAD(+) = all-trans-4-hydroxyretinal + NADH + H(+). It catalyses the reaction all-trans-4-oxoretinol + NAD(+) = all-trans-4-oxoretinal + NADH + H(+). Functionally, catalyzes the NAD-dependent oxidation of all-trans-retinol and its derivatives such as all-trans-4-hydroxyretinol and may participate in retinoid metabolism. In vitro can also catalyze the NADH-dependent reduction of all-trans-retinal and its derivatives such as all-trans-4-oxoretinal. Catalyzes in the oxidative direction with higher efficiency. Has the same affinity for all-trans-4-hydroxyretinol and all-trans-4-oxoretinal. This is All-trans-retinol dehydrogenase [NAD(+)] ADH1B from Homo sapiens (Human).